A 196-amino-acid chain; its full sequence is Superoxide dismutase [Fe] (196 aa).

Residues H20, H68, D157, and H161 each coordinate Fe cation.

It belongs to the iron/manganese superoxide dismutase family. In terms of assembly, homotetramer. It depends on Fe cation as a cofactor.

The catalysed reaction is 2 superoxide + 2 H(+) = H2O2 + O2. Functionally, destroys superoxide anion radicals which are normally produced within the cells and which are toxic to biological systems. The chain is Superoxide dismutase [Fe] from Tetrahymena pyriformis.